Here is a 591-residue protein sequence, read N- to C-terminus: Aspartate--tRNA(Asp/Asn) ligase (591 aa).

Residue glutamate 176 participates in L-aspartate binding. The segment at 200–203 (QLFK) is aspartate. L-aspartate is bound at residue arginine 222. ATP contacts are provided by residues 222 to 224 (RDE) and glutamine 231. Histidine 450 contributes to the L-aspartate binding site. Glutamate 484 is an ATP binding site. Arginine 491 contacts L-aspartate. 536-539 (GLDR) lines the ATP pocket.

It belongs to the class-II aminoacyl-tRNA synthetase family. Type 1 subfamily. Homodimer.

It localises to the cytoplasm. The enzyme catalyses tRNA(Asx) + L-aspartate + ATP = L-aspartyl-tRNA(Asx) + AMP + diphosphate. In terms of biological role, aspartyl-tRNA synthetase with relaxed tRNA specificity since it is able to aspartylate not only its cognate tRNA(Asp) but also tRNA(Asn). Reaction proceeds in two steps: L-aspartate is first activated by ATP to form Asp-AMP and then transferred to the acceptor end of tRNA(Asp/Asn). This chain is Aspartate--tRNA(Asp/Asn) ligase, found in Bacillus cereus (strain AH187).